The primary structure comprises 101 residues: CYC02 protein (101 aa).

One copy of the 1; approximate repeat lies at 42-64 (DAVCHHGCCRWFHHRCVRCCRSA). The tract at residues 42–101 (DAVCHHGCCRWFHHRCVRCCRSAEEVSVSDTENNAAADAHCRHGCCRWFHGRCIRCCPSA) is 2 X approximate repeats. A 2; approximate repeat occupies 79 to 101 (DAHCRHGCCRWFHGRCIRCCPSA).

It belongs to the GRP family.

Functionally, may be involved in the control of the cell cycle at the G1/S start transition. The protein is CYC02 protein (CYC02) of Catharanthus roseus (Madagascar periwinkle).